The following is a 420-amino-acid chain: UDP-N-acetylglucosamine 1-carboxyvinyltransferase (420 aa).

Lys22 to Asn23 serves as a coordination point for phosphoenolpyruvate. Residue Arg92 participates in UDP-N-acetyl-alpha-D-glucosamine binding. The Proton donor role is filled by Cys116. Cys116 carries the post-translational modification 2-(S-cysteinyl)pyruvic acid O-phosphothioketal. UDP-N-acetyl-alpha-D-glucosamine is bound by residues Arg121 to Gln125, Asp304, and Ile326.

Belongs to the EPSP synthase family. MurA subfamily.

It localises to the cytoplasm. It carries out the reaction phosphoenolpyruvate + UDP-N-acetyl-alpha-D-glucosamine = UDP-N-acetyl-3-O-(1-carboxyvinyl)-alpha-D-glucosamine + phosphate. It functions in the pathway cell wall biogenesis; peptidoglycan biosynthesis. Functionally, cell wall formation. Adds enolpyruvyl to UDP-N-acetylglucosamine. The sequence is that of UDP-N-acetylglucosamine 1-carboxyvinyltransferase from Paraburkholderia xenovorans (strain LB400).